We begin with the raw amino-acid sequence, 187 residues long: Ribosome maturation factor RimM (187 aa).

The region spanning 96–169 is the PRC barrel domain; the sequence is EDEFFYADLE…KLVIDPTAAG (74 aa).

It belongs to the RimM family. Binds ribosomal protein uS19.

It localises to the cytoplasm. In terms of biological role, an accessory protein needed during the final step in the assembly of 30S ribosomal subunit, possibly for assembly of the head region. Essential for efficient processing of 16S rRNA. May be needed both before and after RbfA during the maturation of 16S rRNA. It has affinity for free ribosomal 30S subunits but not for 70S ribosomes. The polypeptide is Ribosome maturation factor RimM (Rhizobium meliloti (strain 1021) (Ensifer meliloti)).